Here is a 109-residue protein sequence, read N- to C-terminus: Guanylate cyclase activator 2B (109 aa).

An N-terminal signal peptide occupies residues 1-23 (MKVLALPVAVAAMLLVLAQNTQS). A propeptide spanning residues 24-94 (VYIQYEGFQV…NIFRALRSIS (71 aa)) is cleaved from the precursor. 3 disulfide bridges follow: cysteine 65–cysteine 78, cysteine 98–cysteine 106, and cysteine 101–cysteine 109.

This sequence belongs to the guanylin family. In terms of tissue distribution, small and large intestine and atria and ventricles of heart. Both uroguanylin and prouroguanylin are found in plasma.

It is found in the secreted. Endogenous activator of intestinal guanylate cyclase. It stimulates this enzyme through the same receptor binding region as the heat-stable enterotoxins. May be a potent physiological regulator of intestinal fluid and electrolyte transport. May be an autocrine/paracrine regulator of intestinal salt and water transport. The chain is Guanylate cyclase activator 2B (GUCA2B) from Didelphis virginiana (North American opossum).